We begin with the raw amino-acid sequence, 240 residues long: Protein CDV3 homolog A (240 aa).

Basic and acidic residues predominate over residues 1-15; the sequence is MAEPQEKSLDDFFAK. Residues 1-204 form a disordered region; it reads MAEPQEKSLD…TESRREKEME (204 aa). N-acetylalanine is present on alanine 2. Residues 27–52 are compositionally biased toward low complexity; the sequence is SGSAAGSRGSARPPDGAPSSSSSMSG. The span at 57 to 73 shows a compositional bias: basic and acidic residues; it reads VKKEKSGKSDNPDQLQE. Composition is skewed to polar residues over residues 127–141 and 181–192; these read DKSS…QAQA and SDTQFPSLQATA. Over residues 193-204 the composition is skewed to basic and acidic residues; sequence KHTESRREKEME.

The protein belongs to the CDV3 family.

It is found in the cytoplasm. The chain is Protein CDV3 homolog A (cdv3-a) from Xenopus laevis (African clawed frog).